The chain runs to 930 residues: RNA-binding protein 10 (930 aa).

Basic and acidic residues-rich tracts occupy residues 1–14 (MEYERRGGRGDRTG) and 21–45 (RSQDDSGENRSRDHDYRDMDYRSYP). The segment at 1–127 (MEYERRGGRG…EDEEEEEEKA (127 aa)) is disordered. A compositionally biased stretch (acidic residues) spans 59–70 (DSSEEQSAEDSY). Residues S61 and S89 each carry the phosphoserine modification. Over residues 80–89 (RRRRRRHRHS) the composition is skewed to basic residues. Residues 98-111 (RDGDYRDQDYRTEQ) show a composition bias toward basic and acidic residues. Residues 112-125 (GEEEEEEDEEEEEE) are compositionally biased toward acidic residues. Residues 129–209 (NIVMLRMLPQ…QKVSMHYSDP (81 aa)) enclose the RRM 1 domain. The segment at 212-242 (KINEDWLCNKCGVQNFKRREKCFKCGVPKSE) adopts a RanBP2-type zinc-finger fold. One can recognise an RRM 2 domain in the interval 300–384 (DTIILRNLNP…KTINVEFAKG (85 aa)). Residue K383 is modified to N6-acetyllysine. Disordered regions lie at residues 464 to 487 (GPGMTGTKGDPAGTGPEASLEAGA), 503 to 522 (APGLYQQSAEGSSGQSTATN), 537 to 566 (ELQSPTQPSSSAFPPATSPTAPEAYSQYPV), 620 to 646 (EQSADGHKDTGASSKEGKEKKEKHKTK), and 712 to 753 (DLPK…EEKL). Positions 507-522 (YQQSAEGSSGQSTATN) are enriched in polar residues. Low complexity predominate over residues 540-562 (SPTQPSSSAFPPATSPTAPEAYS). The span at 623-639 (ADGHKDTGASSKEGKEK) shows a compositional bias: basic and acidic residues. 5 positions are modified to phosphoserine: S718, S723, S733, S736, and S738. Over residues 743 to 753 (ERGGPEREEKL) the composition is skewed to basic and acidic residues. A C2H2-type; atypical zinc finger spans residues 759 to 784 (LACLLCRRQFPSKEALIRHQQLSGLH). Phosphoserine occurs at positions 781, 797, and 845. The interval 818–861 (AAERREKYGIPEPPEPKRRKYGGISTASVDFEQPTRDGLGSDNI) is disordered. In terms of domain architecture, G-patch spans 858–904 (SDNIGSRMLQAMGWKEGSGLGRKKQGIVTPIEAQTRVRGSGLGARGS). R902 is modified (omega-N-methylarginine).

In terms of assembly, associates with the spliceosome. Component of a large chromatin remodeling complex, at least composed of MYSM1, PCAF, RBM10 and KIF11/TRIP5.

The protein resides in the nucleus. Functionally, binds to ssRNA containing the consensus sequence 5'-AGGUAA-3'. May be involved in post-transcriptional processing, most probably in mRNA splicing. Binds to RNA homopolymers, with a preference for poly(G) and poly(U) and little for poly(A). May bind to specific miRNA hairpins. This chain is RNA-binding protein 10, found in Mus musculus (Mouse).